Here is an 81-residue protein sequence, read N- to C-terminus: Protein RALF-like 7 (81 aa).

Residues 1–29 (MSARKKNRIHVFFVSIMIIISLVSGFGEG) form the signal peptide. Cystine bridges form between Cys46–Cys54 and Cys66–Cys72.

This sequence belongs to the plant rapid alkalinization factor (RALF) family.

Its subcellular location is the secreted. In terms of biological role, cell signaling peptide that may regulate plant stress, growth, and development. Mediates a rapid alkalinization of extracellular space by mediating a transient increase in the cytoplasmic Ca(2+) concentration leading to a calcium-dependent signaling events through a cell surface receptor and a concomitant activation of some intracellular mitogen-activated protein kinases. This Arabidopsis thaliana (Mouse-ear cress) protein is Protein RALF-like 7 (RALFL7).